Here is a 188-residue protein sequence, read N- to C-terminus: NADH-quinone oxidoreductase subunit B 1 (188 aa).

Positions 32, 33, 98, and 128 each coordinate [4Fe-4S] cluster. The tract at residues valine 153–serine 188 is disordered. A compositionally biased stretch (low complexity) spans serine 157–leucine 177.

Belongs to the complex I 20 kDa subunit family. NDH-1 is composed of 14 different subunits. Subunits NuoB, C, D, E, F, and G constitute the peripheral sector of the complex. Requires [4Fe-4S] cluster as cofactor.

It localises to the cell membrane. It catalyses the reaction a quinone + NADH + 5 H(+)(in) = a quinol + NAD(+) + 4 H(+)(out). Functionally, NDH-1 shuttles electrons from NADH, via FMN and iron-sulfur (Fe-S) centers, to quinones in the respiratory chain. The immediate electron acceptor for the enzyme in this species is believed to be a menaquinone. Couples the redox reaction to proton translocation (for every two electrons transferred, four hydrogen ions are translocated across the cytoplasmic membrane), and thus conserves the redox energy in a proton gradient. The protein is NADH-quinone oxidoreductase subunit B 1 (nuoB1) of Salinispora tropica (strain ATCC BAA-916 / DSM 44818 / JCM 13857 / NBRC 105044 / CNB-440).